A 511-amino-acid polypeptide reads, in one-letter code: Probable mannosyl-oligosaccharide alpha-1,2-mannosidase 1B (511 aa).

Positions 1-18 (MHLPSLSLAWALAGSSLA) are cleaved as a signal peptide. N-linked (GlcNAc...) asparagine glycans are attached at residues N90 and N177. C327 and C356 form a disulfide bridge. E370 serves as the catalytic Proton donor. N433 carries an N-linked (GlcNAc...) asparagine glycan. A Ca(2+)-binding site is contributed by T501.

It belongs to the glycosyl hydrolase 47 family. Monomer. It depends on Ca(2+) as a cofactor. Mg(2+) is required as a cofactor.

Its subcellular location is the cytoplasmic vesicle lumen. The enzyme catalyses N(4)-(alpha-D-Man-(1-&gt;2)-alpha-D-Man-(1-&gt;2)-alpha-D-Man-(1-&gt;3)-[alpha-D-Man-(1-&gt;2)-alpha-D-Man-(1-&gt;3)-[alpha-D-Man-(1-&gt;2)-alpha-D-Man-(1-&gt;6)]-alpha-D-Man-(1-&gt;6)]-beta-D-Man-(1-&gt;4)-beta-D-GlcNAc-(1-&gt;4)-beta-D-GlcNAc)-L-asparaginyl-[protein] (N-glucan mannose isomer 9A1,2,3B1,2,3) + 4 H2O = N(4)-(alpha-D-Man-(1-&gt;3)-[alpha-D-Man-(1-&gt;3)-[alpha-D-Man-(1-&gt;6)]-alpha-D-Man-(1-&gt;6)]-beta-D-Man-(1-&gt;4)-beta-D-GlcNAc-(1-&gt;4)-beta-D-GlcNAc)-L-asparaginyl-[protein] (N-glucan mannose isomer 5A1,2) + 4 beta-D-mannose. It catalyses the reaction N(4)-(alpha-D-Man-(1-&gt;2)-alpha-D-Man-(1-&gt;2)-alpha-D-Man-(1-&gt;3)-[alpha-D-Man-(1-&gt;3)-[alpha-D-Man-(1-&gt;2)-alpha-D-Man-(1-&gt;6)]-alpha-D-Man-(1-&gt;6)]-beta-D-Man-(1-&gt;4)-beta-D-GlcNAc-(1-&gt;4)-beta-D-GlcNAc)-L-asparaginyl-[protein] (N-glucan mannose isomer 8A1,2,3B1,3) + 3 H2O = N(4)-(alpha-D-Man-(1-&gt;3)-[alpha-D-Man-(1-&gt;3)-[alpha-D-Man-(1-&gt;6)]-alpha-D-Man-(1-&gt;6)]-beta-D-Man-(1-&gt;4)-beta-D-GlcNAc-(1-&gt;4)-beta-D-GlcNAc)-L-asparaginyl-[protein] (N-glucan mannose isomer 5A1,2) + 3 beta-D-mannose. It functions in the pathway protein modification; protein glycosylation. Involved in the maturation of Asn-linked oligosaccharides. Progressively trims alpha-1,2-linked mannose residues from Man(9)GlcNAc(2) to produce Man(5)GlcNAc(2). The chain is Probable mannosyl-oligosaccharide alpha-1,2-mannosidase 1B (mns1B) from Aspergillus clavatus (strain ATCC 1007 / CBS 513.65 / DSM 816 / NCTC 3887 / NRRL 1 / QM 1276 / 107).